We begin with the raw amino-acid sequence, 1084 residues long: Myosin heavy chain, skeletal muscle (1084 aa).

Disordered regions lie at residues Ser1–Glu20, Glu270–Leu292, and Arg298–Glu317. Residues Ser1–Met258 form an alpha-helical tailpiece (S2) region. Residues Thr259–Glu1084 form a rodlike tail (S2 and LMM domains) region. Over residues Ala273–Leu292 the composition is skewed to basic and acidic residues. Positions Gln455 to Glu1084 form a coiled coil.

Muscle myosin is a hexameric protein that consists of 2 heavy chain subunits (MHC), 2 alkali light chain subunits (MLC) and 2 regulatory light chain subunits (MLC-2).

It localises to the cytoplasm. The protein localises to the myofibril. In terms of biological role, muscle contraction. The sequence is that of Myosin heavy chain, skeletal muscle from Oryctolagus cuniculus (Rabbit).